Reading from the N-terminus, the 103-residue chain is Co-chaperonin GroES (103 aa).

It belongs to the GroES chaperonin family. Heptamer of 7 subunits arranged in a ring. Interacts with the chaperonin GroEL.

It is found in the cytoplasm. In terms of biological role, together with the chaperonin GroEL, plays an essential role in assisting protein folding. The GroEL-GroES system forms a nano-cage that allows encapsulation of the non-native substrate proteins and provides a physical environment optimized to promote and accelerate protein folding. GroES binds to the apical surface of the GroEL ring, thereby capping the opening of the GroEL channel. This chain is Co-chaperonin GroES, found in Synechocystis sp. (strain ATCC 27184 / PCC 6803 / Kazusa).